Consider the following 345-residue polypeptide: Ferrochelatase (345 aa).

Fe cation contacts are provided by histidine 199 and glutamate 302.

It belongs to the ferrochelatase family.

Its subcellular location is the cytoplasm. It catalyses the reaction heme b + 2 H(+) = protoporphyrin IX + Fe(2+). Its pathway is porphyrin-containing compound metabolism; protoheme biosynthesis; protoheme from protoporphyrin-IX: step 1/1. Its function is as follows. Catalyzes the ferrous insertion into protoporphyrin IX. The polypeptide is Ferrochelatase (Porphyromonas gingivalis (strain ATCC 33277 / DSM 20709 / CIP 103683 / JCM 12257 / NCTC 11834 / 2561)).